An 807-amino-acid polypeptide reads, in one-letter code: DNA gyrase subunit B (807 aa).

Residues 429–543 (SELFIVEGDS…KGYLYIAQPP (115 aa)) enclose the Toprim domain. Positions 435, 508, and 510 each coordinate Mg(2+).

Belongs to the type II topoisomerase GyrB family. Heterotetramer, composed of two GyrA and two GyrB chains. In the heterotetramer, GyrA contains the active site tyrosine that forms a transient covalent intermediate with DNA, while GyrB binds cofactors and catalyzes ATP hydrolysis. Mg(2+) serves as cofactor. It depends on Mn(2+) as a cofactor. Requires Ca(2+) as cofactor.

The protein localises to the cytoplasm. It catalyses the reaction ATP-dependent breakage, passage and rejoining of double-stranded DNA.. In terms of biological role, a type II topoisomerase that negatively supercoils closed circular double-stranded (ds) DNA in an ATP-dependent manner to modulate DNA topology and maintain chromosomes in an underwound state. Negative supercoiling favors strand separation, and DNA replication, transcription, recombination and repair, all of which involve strand separation. Also able to catalyze the interconversion of other topological isomers of dsDNA rings, including catenanes and knotted rings. Type II topoisomerases break and join 2 DNA strands simultaneously in an ATP-dependent manner. This chain is DNA gyrase subunit B, found in Rickettsia conorii (strain ATCC VR-613 / Malish 7).